The primary structure comprises 59 residues: Large ribosomal subunit protein bL32 (59 aa).

A compositionally biased stretch (basic residues) spans 1–19 (MPVPKRRMSRSNTRSRRAQ). The tract at residues 1–20 (MPVPKRRMSRSNTRSRRAQW) is disordered.

This sequence belongs to the bacterial ribosomal protein bL32 family.

This is Large ribosomal subunit protein bL32 from Acidothermus cellulolyticus (strain ATCC 43068 / DSM 8971 / 11B).